The chain runs to 299 residues: MAEFPASLLILNGKSTDNLPLREAIMLLREEGMTIHVRVTWEKGDAARYVEEARKLGVATVIAGGGDGTINEVSTALIQCEGDDIPALGILPLGTANDFATSVRIPEALDKALKLAIAGDAIAIDMAQVNKQTCFINMATGGFGTRITTETPEKLKAALGGVSYIIHGLMRMDTLQPDRCEIRGENFHWQGDALVIGIGNGRQAGGGQQLCPNALINDGLLQLRIFTGDEILPALVSTLKSDEDNPNIIEGASSWFDIQAPHEITFNLDGEPLSGQNFHIEILPAALRCRLPPDCPLLR.

The 132-residue stretch at 2-133 folds into the DAGKc domain; the sequence is AEFPASLLIL…IDMAQVNKQT (132 aa). ATP-binding positions include T40, 66-72, and T95; that span reads GDGTINE. 3 residues coordinate Mg(2+): L215, D218, and L220. E271 functions as the Proton acceptor in the catalytic mechanism.

Belongs to the diacylglycerol/lipid kinase family. YegS lipid kinase subfamily. Requires Mg(2+) as cofactor. Ca(2+) is required as a cofactor.

It is found in the cytoplasm. In terms of biological role, probably phosphorylates lipids; the in vivo substrate is unknown. The sequence is that of Probable lipid kinase YegS from Escherichia coli O17:K52:H18 (strain UMN026 / ExPEC).